We begin with the raw amino-acid sequence, 238 residues long: Small ribosomal subunit protein uS2 (238 aa).

It belongs to the universal ribosomal protein uS2 family.

The protein is Small ribosomal subunit protein uS2 of Synechococcus sp. (strain CC9311).